Here is a 492-residue protein sequence, read N- to C-terminus: Replication factor C large subunit (492 aa).

Residue 46–53 (GPPGSGKT) coordinates ATP. Residues 445 to 492 (VIPKRPKISDNQISEILTKDNNPKDDVKKASKKPESTSKKQATLDKFF) are disordered. The segment covering 461 to 482 (LTKDNNPKDDVKKASKKPESTS) has biased composition (basic and acidic residues).

This sequence belongs to the activator 1 small subunits family. RfcL subfamily. As to quaternary structure, heteromultimer composed of small subunits (RfcS) and large subunits (RfcL).

Its function is as follows. Part of the RFC clamp loader complex which loads the PCNA sliding clamp onto DNA. This is Replication factor C large subunit from Methanococcus vannielii (strain ATCC 35089 / DSM 1224 / JCM 13029 / OCM 148 / SB).